Reading from the N-terminus, the 370-residue chain is Proto-oncogene Wnt-1 (370 aa).

An N-terminal signal peptide occupies residues methionine 1 to alanine 27. The N-linked (GlcNAc...) asparagine glycan is linked to asparagine 29. Disulfide bonds link cysteine 93–cysteine 104, cysteine 143–cysteine 151, cysteine 153–cysteine 170, cysteine 218–cysteine 232, cysteine 220–cysteine 227, cysteine 299–cysteine 330, cysteine 315–cysteine 325, cysteine 329–cysteine 369, cysteine 345–cysteine 360, cysteine 347–cysteine 357, and cysteine 352–cysteine 353. A lipid anchor (O-palmitoleoyl serine; by PORCN) is attached at serine 224. Asparagine 316 and asparagine 346 each carry an N-linked (GlcNAc...) asparagine glycan. N-linked (GlcNAc...) asparagine glycosylation is present at asparagine 359.

This sequence belongs to the Wnt family. Forms a soluble 1:1 complex with AFM; this prevents oligomerization and is required for prolonged biological activity. The complex with AFM may represent the physiological form in body fluids. Interacts with PORCN. Interacts with RSPO1, RSPO2 and RSPO3. Interacts with WLS. In terms of processing, palmitoleoylation is required for efficient binding to frizzled receptors. Palmitoleoylation is necessary for proper trafficking to cell surface. Depalmitoleoylated by NOTUM, leading to inhibit Wnt signaling pathway.

It localises to the secreted. Its subcellular location is the extracellular space. It is found in the extracellular matrix. Ligand for members of the frizzled family of seven transmembrane receptors. Acts in the canonical Wnt signaling pathway by promoting beta-catenin-dependent transcriptional activation. In some developmental processes, is also a ligand for the coreceptor RYK, thus triggering Wnt signaling. Plays an essential role in the development of the embryonic brain and central nervous system (CNS). Has a role in osteoblast function, bone development and bone homeostasis. The chain is Proto-oncogene Wnt-1 (WNT1) from Homo sapiens (Human).